Here is a 251-residue protein sequence, read N- to C-terminus: tRNA pseudouridine synthase A (251 aa).

D52 functions as the Nucleophile in the catalytic mechanism. Y113 is a substrate binding site.

This sequence belongs to the tRNA pseudouridine synthase TruA family. Homodimer.

It carries out the reaction uridine(38/39/40) in tRNA = pseudouridine(38/39/40) in tRNA. In terms of biological role, formation of pseudouridine at positions 38, 39 and 40 in the anticodon stem and loop of transfer RNAs. The sequence is that of tRNA pseudouridine synthase A from Brucella abortus (strain 2308).